A 269-amino-acid polypeptide reads, in one-letter code: uncharacterized protein (269 aa).

The segment covering 1–16 has biased composition (pro residues); that stretch reads MTDVPSKPPQTTPPPK. Disordered stretches follow at residues 1–110 and 157–269; these read MTDV…TISG and ILQQ…PTIQ. The span at 21 to 45 shows a compositional bias: polar residues; it reads APTTIFSSPPQLPDRSSLNISHTAS. The span at 46-58 shows a compositional bias: low complexity; the sequence is TPTLTPTPLQQQQ. Over residues 80–93 the composition is skewed to polar residues; that stretch reads SFSNSPNRQTQSFI. Over residues 159–181 the composition is skewed to low complexity; sequence QQPQQSHSPQQQQQQHTPNHQQP. The segment covering 182 to 195 has biased composition (polar residues); the sequence is LSPQQQKDLAQKRS. Residues 198–213 show a composition bias toward pro residues; the sequence is PLPPRPNKNRPLPTPI.

This is an uncharacterized protein from Dictyostelium discoideum (Social amoeba).